The following is a 189-amino-acid chain: Putative manganese efflux pump MntP (189 aa).

The next 6 membrane-spanning stretches (helical) occupy residues 3–23 (LSAT…ASIG), 41–61 (LIFG…GLFA), 65–85 (ILEW…CRMI), 104–124 (FWVL…IGVG), 132–152 (IVHT…LGML), and 165–185 (AEII…YEHI).

The protein belongs to the MntP (TC 9.B.29) family.

The protein resides in the cell inner membrane. Functionally, probably functions as a manganese efflux pump. This is Putative manganese efflux pump MntP from Yersinia enterocolitica serotype O:8 / biotype 1B (strain NCTC 13174 / 8081).